The following is a 494-amino-acid chain: Ribonuclease H (494 aa).

2 disordered regions span residues 79 to 148 and 205 to 231; these read NRRR…APPP and RSGL…VGLR. Composition is skewed to polar residues over residues 84 to 100 and 131 to 143; these read GSTS…NQLA and PTTS…TRTS. Positions 272–488 constitute an RNase H type-1 domain; it reads SSVPQVVYVD…ADVLAVAGAR (217 aa). Residues aspartate 281, glutamate 325, aspartate 374, and aspartate 480 each coordinate Mg(2+).

This sequence belongs to the RNase H family. In terms of assembly, monomer. The cofactor is Mg(2+).

The enzyme catalyses Endonucleolytic cleavage to 5'-phosphomonoester.. Functionally, endonuclease that specifically degrades the RNA of RNA-DNA hybrids. This is Ribonuclease H (RNH1) from Crithidia fasciculata.